The chain runs to 757 residues: RNA-directed RNA polymerase catalytic subunit (757 aa).

The segment at 52–82 is disordered; that stretch reads RGKWTTNTETGAPQLNPIDGPLPEDNEPSGY. Polar residues predominate over residues 55–64; that stretch reads WTTNTETGAP. Short sequence motifs (nuclear localization signal) lie at residues 187-195 and 203-216; these read RKRRVRDNM and RTIGKKKQRLNKRS. Residues 249–256 form a promoter-binding site region; that stretch reads RGFVYFVE. The RdRp catalytic domain occupies 286–483; that stretch reads VRKMMTNSQD…GINMSKKKSY (198 aa).

Belongs to the influenza viruses polymerase PB1 family. Influenza RNA polymerase is composed of three subunits: PB1, PB2 and PA. Interacts (via N-terminus) with PA (via C-terminus). Interacts (via C-terminus) with PB2 (via N-terminus); this interaction is essential for transcription initiation. In terms of processing, phosphorylated by host PRKCA.

It localises to the host nucleus. It is found in the host cytoplasm. It catalyses the reaction RNA(n) + a ribonucleoside 5'-triphosphate = RNA(n+1) + diphosphate. RNA-dependent RNA polymerase which is responsible for replication and transcription of virus RNA segments. The transcription of viral mRNAs occurs by a unique mechanism called cap-snatching. 5' methylated caps of cellular mRNAs are cleaved after 10-13 nucleotides by PA. In turn, these short capped RNAs are used as primers by PB1 for transcription of viral mRNAs. During virus replication, PB1 initiates RNA synthesis and copy vRNA into complementary RNA (cRNA) which in turn serves as a template for the production of more vRNAs. This chain is RNA-directed RNA polymerase catalytic subunit, found in Aves.